Here is a 341-residue protein sequence, read N- to C-terminus: Methionine import ATP-binding protein MetN 2 (341 aa).

An ABC transporter domain is found at 2 to 241 (INLQNVSKIY…PKEEMTKRFV (240 aa)). ATP is bound at residue 38 to 45 (GYSGAGKS).

This sequence belongs to the ABC transporter superfamily. Methionine importer (TC 3.A.1.24) family. In terms of assembly, the complex is composed of two ATP-binding proteins (MetN), two transmembrane proteins (MetI) and a solute-binding protein (MetQ).

It is found in the cell membrane. It carries out the reaction L-methionine(out) + ATP + H2O = L-methionine(in) + ADP + phosphate + H(+). The catalysed reaction is D-methionine(out) + ATP + H2O = D-methionine(in) + ADP + phosphate + H(+). In terms of biological role, part of the ABC transporter complex MetNIQ involved in methionine import. Responsible for energy coupling to the transport system. This chain is Methionine import ATP-binding protein MetN 2, found in Bacillus licheniformis (strain ATCC 14580 / DSM 13 / JCM 2505 / CCUG 7422 / NBRC 12200 / NCIMB 9375 / NCTC 10341 / NRRL NRS-1264 / Gibson 46).